Reading from the N-terminus, the 555-residue chain is Glutamine--tRNA ligase (555 aa).

The short motif at 34-44 is the 'HIGH' region element; sequence PEPNGYLHIGH. Residues 35–37 and 41–47 each bind ATP; these read EPN and HIGHAKS. L-glutamine contacts are provided by D67 and Y212. ATP contacts are provided by residues T231, 261–262, and 269–271; these read RL and MSK. Positions 268–272 match the 'KMSKS' region motif; that stretch reads IMSKR.

Belongs to the class-I aminoacyl-tRNA synthetase family. Monomer.

It is found in the cytoplasm. It carries out the reaction tRNA(Gln) + L-glutamine + ATP = L-glutaminyl-tRNA(Gln) + AMP + diphosphate. The sequence is that of Glutamine--tRNA ligase from Yersinia pseudotuberculosis serotype O:3 (strain YPIII).